The chain runs to 340 residues: Glycerol-3-phosphate dehydrogenase [NAD(P)+] (340 aa).

Positions 11, 12, 33, and 106 each coordinate NADPH. The sn-glycerol 3-phosphate site is built by Lys-106, Gly-137, and Ser-139. Residue Ala-141 coordinates NADPH. The sn-glycerol 3-phosphate site is built by Lys-192, Asp-245, Ser-255, Arg-256, and Asn-257. Lys-192 serves as the catalytic Proton acceptor. Arg-256 serves as a coordination point for NADPH. Positions 280 and 282 each coordinate NADPH.

It belongs to the NAD-dependent glycerol-3-phosphate dehydrogenase family.

Its subcellular location is the cytoplasm. It catalyses the reaction sn-glycerol 3-phosphate + NAD(+) = dihydroxyacetone phosphate + NADH + H(+). The catalysed reaction is sn-glycerol 3-phosphate + NADP(+) = dihydroxyacetone phosphate + NADPH + H(+). Its pathway is membrane lipid metabolism; glycerophospholipid metabolism. In terms of biological role, catalyzes the reduction of the glycolytic intermediate dihydroxyacetone phosphate (DHAP) to sn-glycerol 3-phosphate (G3P), the key precursor for phospholipid synthesis. This is Glycerol-3-phosphate dehydrogenase [NAD(P)+] from Bacillus cereus (strain ATCC 10987 / NRS 248).